Here is a 106-residue protein sequence, read N- to C-terminus: uncharacterized protein (106 aa).

The disordered stretch occupies residues 38 to 106 (KGNKKSKAAT…STHLPYHGSY (69 aa)). Composition is skewed to basic and acidic residues over residues 57-71 (TRQE…HRPE) and 82-96 (WKKE…KETS).

The protein resides in the mitochondrion. This is an uncharacterized protein from Arabidopsis thaliana (Mouse-ear cress).